Reading from the N-terminus, the 91-residue chain is uncharacterized protein (91 aa).

One can recognise an Integrase catalytic domain in the interval Met1–Ile91.

This is an uncharacterized protein from Haemophilus influenzae (strain ATCC 51907 / DSM 11121 / KW20 / Rd).